A 60-amino-acid polypeptide reads, in one-letter code: Large ribosomal subunit protein uL30 (60 aa).

It belongs to the universal ribosomal protein uL30 family. As to quaternary structure, part of the 50S ribosomal subunit.

The polypeptide is Large ribosomal subunit protein uL30 (Symbiobacterium thermophilum (strain DSM 24528 / JCM 14929 / IAM 14863 / T)).